We begin with the raw amino-acid sequence, 196 residues long: RNA-binding protein with multiple splicing (196 aa).

Met-1 is modified (N-acetylmethionine). Thr-12 carries the post-translational modification Phosphothreonine. The 78-residue stretch at 24-101 (RTLFVSGLPL…QTLRLEFAKA (78 aa)) folds into the RRM domain. An interaction with RNA region spans residues 98–105 (FAKANTKM). Thr-113 carries the post-translational modification Phosphothreonine.

In terms of assembly, homodimer; each protein chain binds one RNA molecule via the external surface of the homodimer. Interacts with RNA binding proteins MBNL1, RBFOX2, RBM4 and RBM14; the interaction allows cooperative assembly of stable cell-specific alternative splicing regulatory complexes. Interacts with SMAD2, SMAD3 and SMAD4; the interactions are direct. Ubiquitously expressed, at various levels depending on the isoform and the tissue. Strongly expressed in the heart, prostate, small intestine, large intestine, and ovary; moderately expressed in the placenta, lung, liver, kidney, pancreas, and testis; and poorly expressed in the skeletal muscle, spleen, thymus and peripheral leukocytes.

Its subcellular location is the nucleus. The protein localises to the cytoplasm. It is found in the stress granule. It localises to the P-body. Its function is as follows. RNA binding protein that mediates the regulation of pre-mRNA alternative splicing (AS). Acts either as activator (FLNB, HSPG2, LIPA1, MYOCD, PTPRF and PPFIBP1) or repressor (TPM1, ACTN1, ITGA7, PIEZO1, LSM14B, MBNL1 and MBML2) of splicing events on specific pre-mRNA targets. Together with RNA binding proteins RBFOX2 and MBNL1/2, activates a splicing program associated with differentiated contractile vascular smooth muscle cells (SMC) by regulating AS of numerous pre-mRNA involved in actin cytoskeleton and focal adhesion machineries, suggesting a role in promoting a cell differentiated state. Binds to introns, exons and 3'-UTR associated with tandem CAC trinucleotide motifs separated by a variable spacer region, at a minimum as a dimer. The minimal length of RNA required for RBPMS-binding tandem CAC motifs is 15 nt, with spacing ranging from 1 to 9 nt. Can also bind to CA dinucleotide repeats. Mediates repression of TPM1 exon 3 by binding to CAC tandem repeats in the flanking intronic regions, followed by higher-order oligomerization and heterotypic interactions with other splicing regulators including MBNL1 and RBFOX2, which prevents assembly of ATP-dependent splicing complexes. Functionally, acts as a regulator of pre-mRNA alternative splicing (AS). Binds mRNA. Regulates AS of ACTN1, FLNB, although with lower efficiency than isoform A / RBPMSA. Acts as coactivator of SMAD transcriptional activity in a TGFB1-dependent manner, possibly through increased phosphorylation of SMAD2 and SMAD3 at the C-terminal SSXS regions and promotion of the nuclear accumulation of SMAD proteins. This chain is RNA-binding protein with multiple splicing, found in Homo sapiens (Human).